A 605-amino-acid polypeptide reads, in one-letter code: MKHGETDSYWGGIIKSMGLVFGDIGTSPIYTLTVIIALTKPTQDNILGIISLIVWTLIILVHLEYAVLAMSLSRKGEGGEIVLREILVRMIKPGRQMAFVTFLTYLGVALLMGDGVITPAISILSAVEGTLLIPGLGGLSQNTLILIAGTIALFLFVFQYKGTDKVARAFGPIMVLWFAALALSGAISVSSHPGILAAISPHHAISFLMHNGLPGFFVLSEVILCATGGEALYADMGHLGRKPVKRAWYFVFVALVINYLGQGAFIITHPDAKNILFGMLQYQAPLFYIPFLILTILATIIASQALISGVFSIVYQGINTRMLPLLKVDYTSNQLKSQIYIGSVNWLLLCLVILIMLVFRKSANLAAAYGFAVTGTMVITGIMMTMIFSRTTKKWKVPLALFVTLVDVVFLVSNCNKLPHGGYWSLILASVPLAVILIWTRGQRGLYLALRPLDLETYLLSYEQIYKKGRIAGTGLFFVKEWNIIPPYLVHCTIRSNIVYERNVLISIVRTDEPFGVESVLECGIGTGLDGFMIKAGYMEIFDIELLLKQNGIQEKVIFYGIEDIATTNPIWRVFSVIKKLTPNFVQFNKVPAAKLQGVITRVEM.

Transmembrane regions (helical) follow at residues 18–38, 46–66, 97–117, 138–158, 169–189, 204–224, 247–267, 287–307, 339–359, 368–388, 395–415, and 418–438; these read GLVFGDIGTSPIYTLTVIIAL, ILGIISLIVWTLIILVHLEYA, MAFVTFLTYLGVALLMGDGVI, GLSQNTLILIAGTIALFLFVF, AFGPIMVLWFAALALSGAISV, AISFLMHNGLPGFFVLSEVIL, AWYFVFVALVINYLGQGAFII, FYIPFLILTILATIIASQALI, IYIGSVNWLLLCLVILIMLVF, AYGFAVTGTMVITGIMMTMIF, WKVPLALFVTLVDVVFLVSNC, and LPHGGYWSLILASVPLAVILI.

It belongs to the HAK/KUP transporter (TC 2.A.72) family.

Its subcellular location is the cell inner membrane. It carries out the reaction K(+)(in) + H(+)(in) = K(+)(out) + H(+)(out). Its function is as follows. Transport of potassium into the cell. Likely operates as a K(+):H(+) symporter. This Pelobacter propionicus (strain DSM 2379 / NBRC 103807 / OttBd1) protein is Probable potassium transport system protein Kup.